The sequence spans 366 residues: Aminomethyltransferase (366 aa).

This sequence belongs to the GcvT family. In terms of assembly, the glycine cleavage system is composed of four proteins: P, T, L and H.

The enzyme catalyses N(6)-[(R)-S(8)-aminomethyldihydrolipoyl]-L-lysyl-[protein] + (6S)-5,6,7,8-tetrahydrofolate = N(6)-[(R)-dihydrolipoyl]-L-lysyl-[protein] + (6R)-5,10-methylene-5,6,7,8-tetrahydrofolate + NH4(+). Its function is as follows. The glycine cleavage system catalyzes the degradation of glycine. This Sodalis glossinidius (strain morsitans) protein is Aminomethyltransferase.